The chain runs to 295 residues: Probable CBASS effector molecule IK1_05631 (295 aa).

4 consecutive transmembrane segments (helical) span residues 26-46 (IFYA…ISIY), 56-76 (SNTG…AYQI), 167-187 (ILLF…GFFV), and 190-210 (SMQE…IYGF).

Its subcellular location is the cell membrane. Functionally, effector protein of a CBASS antiviral system. CBASS (cyclic oligonucleotide-based antiphage signaling system) provides immunity against bacteriophage. The CD-NTase protein synthesizes cyclic nucleotides in response to infection; these serve as specific second messenger signals. The signals activate a diverse range of effectors, leading to bacterial cell death and thus abortive phage infection. A type I-B CBASS system. Its function is as follows. Protects B.subtilis against phage infection. When IK1_05630 and IK1_05631 are introduced in B.subtilis BEST7003 there is 1000-fold protection against phage SBSphiC. Both genes are required for protection. Activation leads to bacterial cell lysis and death, which occurs before the phage has finished its replication cycle, thus protecting non-infected bacteria by aborting the phage infection and preventing its propagation. In Bacillus cereus (strain VD146), this protein is Probable CBASS effector molecule IK1_05631.